The sequence spans 138 residues: Large ribosomal subunit protein uL16 (138 aa).

Basic residues predominate over residues 1–13; it reads MLQPSRRKFRKEQ. The interval 1-22 is disordered; the sequence is MLQPSRRKFRKEQKGRNTGIAT.

It belongs to the universal ribosomal protein uL16 family. In terms of assembly, part of the 50S ribosomal subunit.

Binds 23S rRNA and is also seen to make contacts with the A and possibly P site tRNAs. This Methylibium petroleiphilum (strain ATCC BAA-1232 / LMG 22953 / PM1) protein is Large ribosomal subunit protein uL16.